Here is an 87-residue protein sequence, read N- to C-terminus: Small ribosomal subunit protein bS21 (87 aa).

Over residues 47–63 the composition is skewed to basic and acidic residues; sequence YEKPSEKRARQKAEAVR. The segment at 47-87 is disordered; it reads YEKPSEKRARQKAEAVRRARKLARKRAQREGLLPMPKKPGR. Over residues 64 to 73 the composition is skewed to basic residues; that stretch reads RARKLARKRA.

The protein belongs to the bacterial ribosomal protein bS21 family.

The protein is Small ribosomal subunit protein bS21 of Caulobacter vibrioides (strain ATCC 19089 / CIP 103742 / CB 15) (Caulobacter crescentus).